Reading from the N-terminus, the 220-residue chain is Ribose-5-phosphate isomerase A (220 aa).

Substrate contacts are provided by residues 29–32, 82–85, and 95–98; these read TGST, DGCD, and KGGG. Glu104 (proton acceptor) is an active-site residue. Lys122 contributes to the substrate binding site.

This sequence belongs to the ribose 5-phosphate isomerase family. As to quaternary structure, homodimer.

It carries out the reaction aldehydo-D-ribose 5-phosphate = D-ribulose 5-phosphate. The protein operates within carbohydrate degradation; pentose phosphate pathway; D-ribose 5-phosphate from D-ribulose 5-phosphate (non-oxidative stage): step 1/1. Functionally, catalyzes the reversible conversion of ribose-5-phosphate to ribulose 5-phosphate. The sequence is that of Ribose-5-phosphate isomerase A from Laribacter hongkongensis (strain HLHK9).